A 367-amino-acid polypeptide reads, in one-letter code: Protein NDRG4-B (367 aa).

The span at 1–12 shows a compositional bias: basic and acidic residues; sequence MSELRFPEEKPL. Disordered regions lie at residues 1–21 and 333–367; these read MSELRFPEEKPLLRGQDTEME and LTSASSVDGARPRPCTQSESSDGIGQINHTMEVSC. The segment covering 347–367 has biased composition (polar residues); it reads CTQSESSDGIGQINHTMEVSC.

This sequence belongs to the NDRG family.

Its subcellular location is the cytoplasm. The protein localises to the cytosol. Its function is as follows. Contributes to the maintenance of intracerebral BDNF levels within the normal range. May enhance growth factor-induced ERK1 and ERK2 phosphorylation. May attenuate growth factor-promoted ELK1 phosphorylation in a microtubule-dependent manner. The chain is Protein NDRG4-B (ndrg4-b) from Xenopus laevis (African clawed frog).